Consider the following 289-residue polypeptide: MKIIVPATSANIGPGFDSVGVAVTKYLQIEVCEERDEWLIEHQIGKWIPHDERNLLLKIALQIVPDLQPRRLKMTSDVPLARGLGSSSSVIVAGIELANQLGQLNLSDHEKLQLATKIEGHPDNVAPAIYGNLVIASSVEGQVSAIVADFPECDFLAYIPNYELRTRDSRSVLPKKLSYKEAVAASSIANVAVAALLAGDMVTAGQAIEGDLFHERYRQDLVREFAMIKQVTKENGAYATYLSGAGPTVMVLASHDKMPTIKAELEKQPFKGKLHDLRVDTQGVRVEAK.

Pro79–Ser89 contacts ATP.

Belongs to the GHMP kinase family. Homoserine kinase subfamily.

Its subcellular location is the cytoplasm. It carries out the reaction L-homoserine + ATP = O-phospho-L-homoserine + ADP + H(+). The protein operates within amino-acid biosynthesis; L-threonine biosynthesis; L-threonine from L-aspartate: step 4/5. Catalyzes the ATP-dependent phosphorylation of L-homoserine to L-homoserine phosphate. The chain is Homoserine kinase from Streptococcus pneumoniae serotype 2 (strain D39 / NCTC 7466).